Here is a 246-residue protein sequence, read N- to C-terminus: Serine protease 1 (246 aa).

The first 15 residues, 1–15, serve as a signal peptide directing secretion; sequence MKTFIFLALLGATVA. Residues 16-23 constitute a propeptide, activation peptide; sequence FPIDDDDK. The 221-residue stretch at 24–244 folds into the Peptidase S1 domain; the sequence is IVGGYTCSRN…YVSWIQQTIA (221 aa). Cystine bridges form between Cys-30–Cys-160, Cys-48–Cys-64, Cys-132–Cys-233, Cys-139–Cys-206, Cys-171–Cys-185, and Cys-196–Cys-220. His-63 functions as the Charge relay system in the catalytic mechanism. The Ca(2+) site is built by Glu-75, Asn-77, Val-80, and Glu-85. Catalysis depends on Asp-107, which acts as the Charge relay system. Ser-200 serves as the catalytic Charge relay system.

It belongs to the peptidase S1 family. In terms of assembly, interacts with SERPINA1. Requires Ca(2+) as cofactor.

It is found in the secreted. The protein resides in the extracellular space. It catalyses the reaction Preferential cleavage: Arg-|-Xaa, Lys-|-Xaa.. This is Serine protease 1 from Canis lupus familiaris (Dog).